Consider the following 311-residue polypeptide: tRNA-cytidine(32) 2-sulfurtransferase (311 aa).

A PP-loop motif motif is present at residues 47–52 (SGGKDS). Residues Cys-122, Cys-125, and Cys-213 each coordinate [4Fe-4S] cluster.

This sequence belongs to the TtcA family. Homodimer. Mg(2+) is required as a cofactor. The cofactor is [4Fe-4S] cluster.

The protein resides in the cytoplasm. The catalysed reaction is cytidine(32) in tRNA + S-sulfanyl-L-cysteinyl-[cysteine desulfurase] + AH2 + ATP = 2-thiocytidine(32) in tRNA + L-cysteinyl-[cysteine desulfurase] + A + AMP + diphosphate + H(+). Its pathway is tRNA modification. Its function is as follows. Catalyzes the ATP-dependent 2-thiolation of cytidine in position 32 of tRNA, to form 2-thiocytidine (s(2)C32). The sulfur atoms are provided by the cysteine/cysteine desulfurase (IscS) system. This is tRNA-cytidine(32) 2-sulfurtransferase from Shigella boydii serotype 18 (strain CDC 3083-94 / BS512).